The primary structure comprises 724 residues: MEENQLTCLIVGETPAAQFLGWRLSLSNSFIILVSQYVSSDELVAWKSTKLGANFYTPNILTKDIKELHHKLKHNGANTYSIDIVLVSAISLQSFETTCRLLSDYTNDNTTVLISTDFGCELEPIAISYFGGKCKCVISISCEVECRQLSLGSYALVNDDQCVITLGLTYCDANFEASPTILENTKAASLELQGIKGSNVRRFLLGLTVAKWMKSKLILDPKQMALKMWELLIPKISLNILSIIYEQFDYEKMLENKSTEIIFKDLVKELLGICFAQCGSKIARFLLVKSQGEEEINFGKIVEYCKGKKLQLINSTANEHPEYLSLPFEPYCFYHRFEYPAQILLHQPIILAKKYGVSCSNLNFLYGFYTRLLTLSGLSINGGRCEHALSMLDSRIGGGINVASGINSGQDFTDGDNEDQDKGKNRVDKNVKEGSFISLTQRFTMTSPLGVNDPALPADLEKLYLGAEYISNCDANTSGGQKRVKSPTKADTGYDDKHLPDDTIHTFEDEYLADEDDFSCLGIDKRSSTKPTKPLEKFGVVAVPHFIRRFSIKRSSKDKSNDMKRPYTTSSLELQLRSNHFMFAKEYQDLHRQLYYEVKPRTQSELDARRRNYSELESQMWKIKHRFNIHRGALPRPRTNPYELLLDHIDVLNRGNTGDILRFTTSRYGGVDTYDSILRDQSTIMELLDKRCAYSPPVLFDNEAKERDHDRDCYQDYNHDHRSH.

Disordered regions lie at residues 407 to 427 and 477 to 497; these read NSGQDFTDGDNEDQDKGKNRV and TSGGQKRVKSPTKADTGYDDK.

It localises to the cytoplasm. The protein resides in the prospore membrane. Functionally, may be involved in a late step of spore wall assembly. The chain is Outer spore wall protein 2 (OSW2) from Saccharomyces cerevisiae (strain ATCC 204508 / S288c) (Baker's yeast).